Consider the following 335-residue polypeptide: DNA primase small subunit PriS (335 aa).

Catalysis depends on residues Asp-96, Asp-98, and Asp-243.

It belongs to the eukaryotic-type primase small subunit family. Heterodimer of a small subunit (PriS) and a large subunit (PriL). Mg(2+) serves as cofactor. The cofactor is Mn(2+).

Its function is as follows. Catalytic subunit of DNA primase, an RNA polymerase that catalyzes the synthesis of short RNA molecules used as primers for DNA polymerase during DNA replication. The small subunit contains the primase catalytic core and has DNA synthesis activity on its own. Binding to the large subunit stabilizes and modulates the activity, increasing the rate of DNA synthesis while decreasing the length of the DNA fragments, and conferring RNA synthesis capability. The DNA polymerase activity may enable DNA primase to also catalyze primer extension after primer synthesis. May also play a role in DNA repair. The polypeptide is DNA primase small subunit PriS (Archaeoglobus fulgidus (strain ATCC 49558 / DSM 4304 / JCM 9628 / NBRC 100126 / VC-16)).